The chain runs to 330 residues: Putative ADP-ribosyl glycohydrolase L543 (330 aa).

Belongs to the ADP-ribosylglycohydrolase family.

The polypeptide is Putative ADP-ribosyl glycohydrolase L543 (Acanthamoeba polyphaga mimivirus (APMV)).